The chain runs to 487 residues: b(0,+)-type amino acid transporter 1 (487 aa).

The interval 1 to 22 (MGETVPRRRREDEKSIQSDEPK) is disordered. At 1-31 (MGETVPRRRREDEKSIQSDEPKTTSLQKEVG) the chain is on the cytoplasmic side. Position 18 is a phosphoserine (S18). A helical membrane pass occupies residues 32–55 (LISGICIIVGTIIGSGIFISPKSV). 43–47 (IIGSG) contributes to the L-arginine binding site. The Extracellular segment spans residues 56-62 (LSNTQAV). Residues 63-84 (GPCLIIWAACGVLGTLGALCFA) traverse the membrane as a helical segment. The Cytoplasmic portion of the chain corresponds to 85–110 (ELGTMITKSGGEYPYLMEAFGPIPAY). A helical transmembrane segment spans residues 111–137 (LFSWSSLLVMKPSSFAIICLSFSEYVA). Over 138 to 147 (TPFYSGCEPP) the chain is Extracellular. 2 helical membrane-spanning segments follow: residues 148-169 (KVVV…NSLS) and 170-193 (VRLG…IIII). Residues 194-217 (SGLVLLAQGNTKNFENSFEGAEVS) are Extracellular-facing. A helical membrane pass occupies residues 218 to 238 (VGAISLALYNGLWAYDGWNQL). L-arginine is bound at residue D233. Topologically, residues 239–251 (NYITEELRNPFRN) are cytoplasmic. A helical transmembrane segment spans residues 252-274 (LPLAIIFGIPLVTVCYILINISY). At 275–302 (FTVMTPTELLQSQAVAVTFGDRVLYPAS) the chain is on the extracellular side. Residues 303–325 (WIVPVFVAFSTIGAANGTCFTAG) traverse the membrane as a helical segment. Residues 326–351 (RLVYVAGREGHMLKVLSYISVRRLTP) are Cytoplasmic-facing. Transmembrane regions (helical) follow at residues 352–370 (APAI…IPGD) and 371–391 (INSL…LTIL). The Cytoplasmic segment spans residues 392 to 410 (GLIVMRFTRKELERPIKVP). A helical membrane pass occupies residues 411–431 (IFIPILVTFIAAFLVLAPVIT). Residues 432-434 (NPA) lie on the Extracellular side of the membrane. The chain crosses the membrane as a helical span at residues 435 to 450 (WEYLYCVLFILSGLVF). The Cytoplasmic portion of the chain corresponds to 451-487 (YFLFVYYKFEWAQKISKPITMHLQMLMEVVPPEPDPK).

It belongs to the amino acid-polyamine-organocation (APC) superfamily. In terms of assembly, disulfide-linked heterodimer composed of the catalytic light chain subunit SLC7A9 and the heavy chain subunit. The heterodimer is the minimal functional unit. Assembles in heterotetramers (dimers of heterodimers) and higher order oligomers. Interacts with CAV1. As to expression, kidney and small intestine.

Its subcellular location is the apical cell membrane. It carries out the reaction L-leucine(out) + L-arginine(in) = L-leucine(in) + L-arginine(out). It catalyses the reaction L-histidine(out) + L-arginine(in) = L-histidine(in) + L-arginine(out). The catalysed reaction is L-arginine(in) + L-phenylalanine(out) = L-arginine(out) + L-phenylalanine(in). The enzyme catalyses L-cysteine(out) + L-arginine(in) = L-cysteine(in) + L-arginine(out). It carries out the reaction L-cystine(out) + L-arginine(in) = L-cystine(in) + L-arginine(out). It catalyses the reaction L-lysine(out) + L-arginine(in) = L-lysine(in) + L-arginine(out). Its function is as follows. Mediates the electrogenic exchange between cationic amino acids and neutral amino acids, with a stoichiometry of 1:1. Has system b(0,+)-like activity with high affinity for extracellular cationic amino acids and L-cystine and lower affinity for intracellular neutral amino acids. Substrate exchange is driven by high concentration of intracellular neutral amino acids and the intracellular reduction of L-cystine to L-cysteine. Required for reabsorption of L-cystine and dibasic amino acids across the brush border membrane in renal proximal tubules. This is b(0,+)-type amino acid transporter 1 from Oryctolagus cuniculus (Rabbit).